The chain runs to 329 residues: Endo-beta-N-acetylglucosaminidase F3 (329 aa).

The or 40, or 41 signal peptide spans 1 to 39 (MKKIFFAQCSILLLMLGSCSKMTEDMTPESVNKEASVKS). Positions 48–329 (GVCIAYYITD…ANAVRDAVKN (282 aa)) constitute a GH18 domain. An O-linked (Man...) threonine glycan is attached at Thr-88. Glu-167 serves as the catalytic Proton donor.

Belongs to the glycosyl hydrolase 18 family. As to quaternary structure, monomer. In terms of processing, carbohydrate at Thr-88 consists of (2-OMe)Man1-4GlcNAcU1-4GlcU1-4Glc1-4(2-OMe)GlcU1-4[(2-OMe)Rham1-2]Man.

The protein localises to the secreted. It catalyses the reaction an N(4)-(oligosaccharide-(1-&gt;3)-[oligosaccharide-(1-&gt;6)]-beta-D-Man-(1-&gt;4)-beta-D-GlcNAc-(1-&gt;4)-alpha-D-GlcNAc)-L-asparaginyl-[protein] + H2O = an oligosaccharide-(1-&gt;3)-[oligosaccharide-(1-&gt;6)]-beta-D-Man-(1-&gt;4)-D-GlcNAc + N(4)-(N-acetyl-beta-D-glucosaminyl)-L-asparaginyl-[protein]. Functionally, endohydrolysis of the di-N-acetylchitobiosyl unit in high-mannose glycopeptides and glycoproteins. Hydrolyzes bi- and triantennary glycans. The presence of a core-bound fucose greatly augments endo F3 activity on biantennary and, presumably, triantennary oligosaccharides. The sequence is that of Endo-beta-N-acetylglucosaminidase F3 (endOF3) from Elizabethkingia meningoseptica (Chryseobacterium meningosepticum).